A 277-amino-acid polypeptide reads, in one-letter code: Transport and Golgi organization protein 11 (277 aa).

Over 1–256 (MVTPQSPTPM…NNEQRTQREK (256 aa)) the chain is Cytoplasmic. Disordered stretches follow at residues 124–148 (HFPSASEESSPIRANGHHLYGNDLD) and 167–200 (VARMGFQGNDTNSVESDSQLTTGSASKRSQLNQQ). Residues Ser-127, Ser-129, Ser-132, and Ser-133 each carry the phosphoserine modification. A compositionally biased stretch (polar residues) spans 174-200 (GNDTNSVESDSQLTTGSASKRSQLNQQ). Position 177 is a phosphothreonine (Thr-177). A phosphoserine mark is found at Ser-179, Ser-182, and Ser-190. A phosphothreonine mark is found at Thr-216 and Thr-222. A coiled-coil region spans residues 225-253 (EEILYLRRQLAKLNRRVLNIEINNEQRTQ). Residues 257 to 274 (IVYCLGLAYFVLKTIFWL) traverse the membrane as a helical; Anchor for type IV membrane protein segment. Topologically, residues 275 to 277 (NRN) are lumenal.

The protein belongs to the Tango11 family.

The protein localises to the endoplasmic reticulum membrane. The protein resides in the mitochondrion outer membrane. It is found in the peroxisome. Functionally, may play a role in mitochondrial and peroxisomal fission. In Drosophila melanogaster (Fruit fly), this protein is Transport and Golgi organization protein 11 (Tango11).